A 203-amino-acid chain; its full sequence is Probable cytochrome c oxidase subunit 3 (203 aa).

Helical transmembrane passes span 30-50 (IVWLSSELMFFAGLFAMYFTA), 70-90 (AVPVTLVLIASSFTCQMGVFA), 102-122 (WYVITFLMGLFFVLGQGYEYY), 142-162 (LATGFHDLHVTGGLVAFIFLL), and 179-199 (IVVSYYWHFVDIVWIALFTVI).

The protein belongs to the cytochrome c oxidase subunit 3 family.

It localises to the cell membrane. It catalyses the reaction 4 Fe(II)-[cytochrome c] + O2 + 8 H(+)(in) = 4 Fe(III)-[cytochrome c] + 2 H2O + 4 H(+)(out). This is Probable cytochrome c oxidase subunit 3 (ctaE) from Mycolicibacterium paratuberculosis (strain ATCC BAA-968 / K-10) (Mycobacterium paratuberculosis).